We begin with the raw amino-acid sequence, 312 residues long: Ribosomal protein L11 methyltransferase (312 aa).

The S-adenosyl-L-methionine site is built by T163, G184, D206, and N248.

It belongs to the methyltransferase superfamily. PrmA family.

The protein resides in the cytoplasm. The catalysed reaction is L-lysyl-[protein] + 3 S-adenosyl-L-methionine = N(6),N(6),N(6)-trimethyl-L-lysyl-[protein] + 3 S-adenosyl-L-homocysteine + 3 H(+). Methylates ribosomal protein L11. The chain is Ribosomal protein L11 methyltransferase from Clostridium botulinum (strain Okra / Type B1).